The chain runs to 251 residues: Diphthine synthase (251 aa).

S-adenosyl-L-methionine is bound by residues leucine 9, aspartate 84, valine 87, 112–113 (SI), leucine 160, alanine 194, and histidine 219.

The protein belongs to the diphthine synthase family. Homodimer.

The enzyme catalyses 2-[(3S)-amino-3-carboxypropyl]-L-histidyl-[translation elongation factor 2] + 3 S-adenosyl-L-methionine = diphthine-[translation elongation factor 2] + 3 S-adenosyl-L-homocysteine + 3 H(+). The protein operates within protein modification; peptidyl-diphthamide biosynthesis. Its function is as follows. S-adenosyl-L-methionine-dependent methyltransferase that catalyzes the trimethylation of the amino group of the modified target histidine residue in translation elongation factor 2 (EF-2), to form an intermediate called diphthine. The three successive methylation reactions represent the second step of diphthamide biosynthesis. In Archaeoglobus fulgidus (strain ATCC 49558 / DSM 4304 / JCM 9628 / NBRC 100126 / VC-16), this protein is Diphthine synthase.